A 43-amino-acid chain; its full sequence is Protein PsbN (43 aa).

Residues 7–27 (VAIFISCLLVSFTGYALYTAF) form a helical membrane-spanning segment.

This sequence belongs to the PsbN family.

It is found in the plastid. It localises to the chloroplast thylakoid membrane. May play a role in photosystem I and II biogenesis. This chain is Protein PsbN, found in Huperzia lucidula (Shining clubmoss).